We begin with the raw amino-acid sequence, 120 residues long: Large ribosomal subunit protein uL24 (120 aa).

This sequence belongs to the universal ribosomal protein uL24 family. As to quaternary structure, part of the 50S ribosomal subunit.

Its function is as follows. One of two assembly initiator proteins, it binds directly to the 5'-end of the 23S rRNA, where it nucleates assembly of the 50S subunit. Functionally, located at the polypeptide exit tunnel on the outside of the subunit. The protein is Large ribosomal subunit protein uL24 of Archaeoglobus fulgidus (strain ATCC 49558 / DSM 4304 / JCM 9628 / NBRC 100126 / VC-16).